Here is a 446-residue protein sequence, read N- to C-terminus: Mitochondrial distribution and morphology protein 12 (446 aa).

The 446-residue stretch at 1–446 folds into the SMP-LTD domain; sequence MSIDINWEAA…VYPSFWTFLV (446 aa). Residues 75–85 are compositionally biased toward acidic residues; the sequence is DNEIGDGEVSD. 3 disordered regions span residues 75-106, 126-145, and 188-283; these read DNEIGDGEVSDIQDRSPKPRPSSAGNERSAAD, PHDVPIPSKEDPLASRPIRS, and TPLS…RVRE. Basic and acidic residues predominate over residues 126-138; the sequence is PHDVPIPSKEDPL. Positions 233 to 246 are enriched in polar residues; the sequence is TGNSRPSTADTLDS. A compositionally biased stretch (basic and acidic residues) spans 260 to 274; that stretch reads SSDDAHPNVLPRRDN.

It belongs to the MDM12 family. In terms of assembly, component of the ER-mitochondria encounter structure (ERMES) or MDM complex, composed of MMM1, MDM10, MDM12 and MDM34. An MMM1 homodimer associates with one molecule of MDM12 on each side in a pairwise head-to-tail manner, and the SMP-LTD domains of MMM1 and MDM12 generate a continuous hydrophobic tunnel for phospholipid trafficking.

Its subcellular location is the mitochondrion outer membrane. The protein localises to the endoplasmic reticulum membrane. In terms of biological role, component of the ERMES/MDM complex, which serves as a molecular tether to connect the endoplasmic reticulum (ER) and mitochondria. Components of this complex are involved in the control of mitochondrial shape and protein biogenesis, and function in nonvesicular lipid trafficking between the ER and mitochondria. MDM12 is required for the interaction of the ER-resident membrane protein MMM1 and the outer mitochondrial membrane-resident beta-barrel protein MDM10. The MDM12-MMM1 subcomplex functions in the major beta-barrel assembly pathway that is responsible for biogenesis of all mitochondrial outer membrane beta-barrel proteins, and acts in a late step after the SAM complex. The MDM10-MDM12-MMM1 subcomplex further acts in the TOM40-specific pathway after the action of the MDM12-MMM1 complex. Essential for establishing and maintaining the structure of mitochondria and maintenance of mtDNA nucleoids. The protein is Mitochondrial distribution and morphology protein 12 of Coccidioides immitis (strain RS) (Valley fever fungus).